The following is an 889-amino-acid chain: Low-affinity potassium transport protein (889 aa).

The Cytoplasmic segment spans residues 1–51 (MPTAKRTSSRASLALPFQLRLVHKKSWGHRLRDFISGFLKSCRPIAKYVFP). Residues 52 to 73 (NFIVVHYIYLITLSIIGSILLY) traverse the membrane as a helical segment. The Extracellular segment spans residues 74 to 80 (PCKNTAF). The chain crosses the membrane as a helical span at residues 81-101 (IDVLFLAAGASTQGGLATKST). Residues 102–109 (NDFNLYQQ) are Cytoplasmic-facing. A helical membrane pass occupies residues 110–130 (IVVYVITLLSTPILIHGFLAF). Over 131 to 464 (VRLYWFERYF…EYRALRLLCC (334 aa)) the chain is Extracellular. The interval 189 to 244 (REDPRQSASDVPMDSPDTSALSSISPLNVSSSKEESSDTQSSPPNFSSKRQPSDVD) is disordered. Over residues 207 to 219 (SALSSISPLNVSS) the composition is skewed to low complexity. Residues Asn216, Asn233, and Asn265 are each glycosylated (N-linked (GlcNAc...) asparagine). Residues 465–487 (ILMVYYIGFNILAFVTIVPWACT) traverse the membrane as a helical segment. Topologically, residues 488 to 499 (RHHYSEIIRRNG) are cytoplasmic. The helical transmembrane segment at 500 to 521 (VSPTWWGFFTAMSAFSNLGLSL) threads the bilayer. Topologically, residues 522 to 524 (TAD) are extracellular. The helical transmembrane segment at 525-545 (SMVSFDTAPYPLIFMMFFIII) threads the bilayer. Residues 546–548 (GNT) lie on the Cytoplasmic side of the membrane. Residues 549–569 (GFPIMLRFIIWIMFKTSRDLS) form a helical membrane-spanning segment. The Extracellular segment spans residues 570–584 (QFKESLGFLLDHPRR). The helical transmembrane segment at 585-605 (CFTLLFPSGPTWWLFTTLVVL) threads the bilayer. Residues 606–609 (NATD) are Cytoplasmic-facing. The helical transmembrane segment at 610-630 (WILFIILDFNSAVVRQVAKGY) threads the bilayer. Topologically, residues 631 to 657 (RALMGLFQSVCTRTAGFNVVDLSKLHP) are extracellular. A helical transmembrane segment spans residues 658-678 (SIQVSYMLMMYVSVLPLAISI). Topologically, residues 679–743 (RRTNVYEEQS…KSFVGAHLRR (65 aa)) are cytoplasmic. Residues 705-733 (DDIKETDHDGESEERDTVSTKSKPKKQSP) are disordered. The helical transmembrane segment at 744-764 (QLSFDLWYLFLGLFIICICEG) threads the bilayer. At 765 to 776 (RKIEDVNKPDFN) the chain is on the extracellular side. Residues 777–797 (VFAILFEVVSAYGTVGLSLGY) traverse the membrane as a helical segment. Residues 798 to 889 (PNTNTSLSAQ…KIATKFWGKH (92 aa)) are Cytoplasmic-facing.

This sequence belongs to the TrkH potassium transport family.

It localises to the membrane. Functionally, this protein is required for low-affinity potassium transport. This is Low-affinity potassium transport protein (TRK2) from Saccharomyces cerevisiae (strain ATCC 204508 / S288c) (Baker's yeast).